A 476-amino-acid polypeptide reads, in one-letter code: Chromosomal replication initiator protein DnaA (476 aa).

The interval 1–73 (MTNSEQERWS…LSAWQAEMPE (73 aa)) is domain I, interacts with DnaA modulators. The segment at 73 to 132 (EVHRIDLSVRTAMRCATPAKEAPAAVEARRPERSDAKPVSDARAPVMTPVAASHDALGGS) is domain II. The disordered stretch occupies residues 92–115 (KEAPAAVEARRPERSDAKPVSDAR). Residues 99-112 (EARRPERSDAKPVS) are compositionally biased toward basic and acidic residues. Positions 133–355 (PLDPRLTFAS…GAINRLLAHS (223 aa)) are domain III, AAA+ region. ATP contacts are provided by Gly180, Gly182, Lys183, and Thr184. Residues 356-476 (KLNNQPVTLD…VESLKRQLQD (121 aa)) form a domain IV, binds dsDNA region.

The protein belongs to the DnaA family. As to quaternary structure, oligomerizes as a right-handed, spiral filament on DNA at oriC.

The protein localises to the cytoplasm. Plays an essential role in the initiation and regulation of chromosomal replication. ATP-DnaA binds to the origin of replication (oriC) to initiate formation of the DNA replication initiation complex once per cell cycle. Binds the DnaA box (a 9 base pair repeat at the origin) and separates the double-stranded (ds)DNA. Forms a right-handed helical filament on oriC DNA; dsDNA binds to the exterior of the filament while single-stranded (ss)DNA is stabiized in the filament's interior. The ATP-DnaA-oriC complex binds and stabilizes one strand of the AT-rich DNA unwinding element (DUE), permitting loading of DNA polymerase. After initiation quickly degrades to an ADP-DnaA complex that is not apt for DNA replication. Binds acidic phospholipids. This chain is Chromosomal replication initiator protein DnaA, found in Bradyrhizobium sp. (strain ORS 278).